Consider the following 312-residue polypeptide: uncharacterized protein (312 aa).

The protein localises to the mitochondrion. This is an uncharacterized protein from Schizosaccharomyces pombe (strain 972 / ATCC 24843) (Fission yeast).